A 227-amino-acid chain; its full sequence is LysM and putative peptidoglycan-binding domain-containing protein 1 (227 aa).

The segment covering 1 to 11 (MASPSRQPPPG) has biased composition (pro residues). Residues 1-20 (MASPSRQPPPGGSGLLHGSR) are disordered. A phosphoserine mark is found at Ser23 and Ser33. In terms of domain architecture, LysM spans 40–84 (LEHQLEPGDTLAGLALKYGVTMEQIKRANRLYTNDSIFLKKTLYI). Residues 95-150 (NGLDSEEEKDGEEEVRPSNDEVWPHSTERKKQETGAGRANGEVFPTPGQETPTPIH) form a disordered region. Positions 98 to 107 (DSEEEKDGEE) are enriched in acidic residues. Residue Ser99 is modified to Phosphoserine. Residues 108-127 (EVRPSNDEVWPHSTERKKQE) show a composition bias toward basic and acidic residues. Phosphoserine is present on residues Ser166, Ser181, Ser194, and Ser212. Residues 172–196 (AAQKLKKGESGVPGEDAGLHLSSPR) form a disordered region.

The protein is LysM and putative peptidoglycan-binding domain-containing protein 1 (LYSMD1) of Macaca fascicularis (Crab-eating macaque).